The sequence spans 268 residues: Putative hydro-lyase Arad_8587 (268 aa).

This sequence belongs to the D-glutamate cyclase family.

This chain is Putative hydro-lyase Arad_8587, found in Rhizobium rhizogenes (strain K84 / ATCC BAA-868) (Agrobacterium radiobacter).